The following is a 346-amino-acid chain: Centromere protein L (346 aa).

Serine 41 is subject to Phosphoserine. Phosphothreonine is present on threonine 45. Serine 55 is subject to Phosphoserine.

It belongs to the CENP-L/IML3 family. As to quaternary structure, component of the CENPA-CAD complex, composed of CENPI, CENPK, CENPL, CENPO, CENPP, CENPQ, CENPR and CENPS. The CENPA-CAD complex interacts with the CENPA-NAC complex, at least composed of CENPA, CENPC, CENPH, CENPM, CENPN, CENPT and CENPU.

Its subcellular location is the nucleus. It localises to the chromosome. The protein resides in the centromere. Component of the CENPA-CAD (nucleosome distal) complex, a complex recruited to centromeres which is involved in assembly of kinetochore proteins, mitotic progression and chromosome segregation. May be involved in incorporation of newly synthesized CENPA into centromeres via its interaction with the CENPA-NAC complex. This is Centromere protein L (CENPL) from Bos taurus (Bovine).